A 72-amino-acid chain; its full sequence is DNA-directed RNA polymerase subunit Rpo10 (72 aa).

Zn(2+) contacts are provided by cysteine 7, cysteine 10, cysteine 54, and cysteine 55.

It belongs to the archaeal Rpo10/eukaryotic RPB10 RNA polymerase subunit family. Part of the RNA polymerase complex. Requires Zn(2+) as cofactor.

It localises to the cytoplasm. It carries out the reaction RNA(n) + a ribonucleoside 5'-triphosphate = RNA(n+1) + diphosphate. Its function is as follows. DNA-dependent RNA polymerase (RNAP) catalyzes the transcription of DNA into RNA using the four ribonucleoside triphosphates as substrates. This Picrophilus torridus (strain ATCC 700027 / DSM 9790 / JCM 10055 / NBRC 100828 / KAW 2/3) protein is DNA-directed RNA polymerase subunit Rpo10.